The primary structure comprises 406 residues: Argininosuccinate synthase (406 aa).

Residues 14 to 22 (AYSGGLDTS) and alanine 41 each bind ATP. Tyrosine 92 and serine 97 together coordinate L-citrulline. Glycine 122 provides a ligand contact to ATP. The L-aspartate site is built by threonine 124, asparagine 128, and aspartate 129. L-citrulline is bound at residue asparagine 128. Residues arginine 132, serine 181, serine 190, glutamate 266, and tyrosine 278 each contribute to the L-citrulline site.

The protein belongs to the argininosuccinate synthase family. Type 1 subfamily. Homotetramer.

The protein localises to the cytoplasm. It catalyses the reaction L-citrulline + L-aspartate + ATP = 2-(N(omega)-L-arginino)succinate + AMP + diphosphate + H(+). It functions in the pathway amino-acid biosynthesis; L-arginine biosynthesis; L-arginine from L-ornithine and carbamoyl phosphate: step 2/3. This is Argininosuccinate synthase from Geobacter metallireducens (strain ATCC 53774 / DSM 7210 / GS-15).